The primary structure comprises 226 residues: uncharacterized protein (226 aa).

It to L.innocua lin2408 and lin2600.

This is an uncharacterized protein from Listeria innocua serovar 6a (strain ATCC BAA-680 / CLIP 11262).